Reading from the N-terminus, the 314-residue chain is tRNA pseudouridine synthase B (314 aa).

Residue aspartate 54 is the Nucleophile of the active site.

Belongs to the pseudouridine synthase TruB family. Type 1 subfamily.

It catalyses the reaction uridine(55) in tRNA = pseudouridine(55) in tRNA. Responsible for synthesis of pseudouridine from uracil-55 in the psi GC loop of transfer RNAs. This Cupriavidus metallidurans (strain ATCC 43123 / DSM 2839 / NBRC 102507 / CH34) (Ralstonia metallidurans) protein is tRNA pseudouridine synthase B.